We begin with the raw amino-acid sequence, 417 residues long: MLKREMNIADYDADLWRAMEQEVVRQEEHIELIASENYTSPRVMQAQGSQLTNKYAEGYPGKRYYGGCEYVDVVEQLAIDRAKALFGADYANVQPHSGSQANVAVYSALLKPGDTVLGMNLAHGGHLTHGSPVNFSGKLYNIVPYGIDESGQIDYEDLARQAEIHKPKMIIGGFSAYSGIVDWAKMREIADSIDAWFFVDMAHVAGLVAAGVYPNPVPHAHIVTTTTHKTLAGPRGGLILAKGGDEDLYKKLNSSVFPGNQGGPLMHVIAGKAVALKEAMEPEFKIYQQQVAKNAKAMVAVFLERGYKVVSGGTDNHLFLLDLVDKDITGKDADAALGRANITVNKNSVPNDPKSPFVTSGVRIGSPAITRRGFKEAESRELAGWMCDVLDNINDEATIERVKQKVLAICARLPVYA.

(6S)-5,6,7,8-tetrahydrofolate-binding positions include L121 and 125-127; that span reads GHL. K229 bears the N6-(pyridoxal phosphate)lysine mark. 355 to 357 is a binding site for (6S)-5,6,7,8-tetrahydrofolate; sequence SPF.

This sequence belongs to the SHMT family. Homodimer. Requires pyridoxal 5'-phosphate as cofactor.

The protein resides in the cytoplasm. It carries out the reaction (6R)-5,10-methylene-5,6,7,8-tetrahydrofolate + glycine + H2O = (6S)-5,6,7,8-tetrahydrofolate + L-serine. Its pathway is one-carbon metabolism; tetrahydrofolate interconversion. It functions in the pathway amino-acid biosynthesis; glycine biosynthesis; glycine from L-serine: step 1/1. Catalyzes the reversible interconversion of serine and glycine with tetrahydrofolate (THF) serving as the one-carbon carrier. This reaction serves as the major source of one-carbon groups required for the biosynthesis of purines, thymidylate, methionine, and other important biomolecules. Also exhibits THF-independent aldolase activity toward beta-hydroxyamino acids, producing glycine and aldehydes, via a retro-aldol mechanism. The polypeptide is Serine hydroxymethyltransferase (Yersinia pestis bv. Antiqua (strain Antiqua)).